The primary structure comprises 160 residues: NADH-quinone oxidoreductase subunit B (160 aa).

Residues Cys-37, Cys-38, Cys-102, and Cys-132 each coordinate [4Fe-4S] cluster.

Belongs to the complex I 20 kDa subunit family. In terms of assembly, NDH-1 is composed of 14 different subunits. Subunits NuoB, C, D, E, F, and G constitute the peripheral sector of the complex. It depends on [4Fe-4S] cluster as a cofactor.

It is found in the cell inner membrane. It carries out the reaction a quinone + NADH + 5 H(+)(in) = a quinol + NAD(+) + 4 H(+)(out). NDH-1 shuttles electrons from NADH, via FMN and iron-sulfur (Fe-S) centers, to quinones in the respiratory chain. Couples the redox reaction to proton translocation (for every two electrons transferred, four hydrogen ions are translocated across the cytoplasmic membrane), and thus conserves the redox energy in a proton gradient. The polypeptide is NADH-quinone oxidoreductase subunit B (Cupriavidus metallidurans (strain ATCC 43123 / DSM 2839 / NBRC 102507 / CH34) (Ralstonia metallidurans)).